The sequence spans 104 residues: Large ribosomal subunit protein uL24 (104 aa).

The protein belongs to the universal ribosomal protein uL24 family. As to quaternary structure, part of the 50S ribosomal subunit.

In terms of biological role, one of two assembly initiator proteins, it binds directly to the 5'-end of the 23S rRNA, where it nucleates assembly of the 50S subunit. Its function is as follows. One of the proteins that surrounds the polypeptide exit tunnel on the outside of the subunit. The protein is Large ribosomal subunit protein uL24 of Methylorubrum extorquens (strain PA1) (Methylobacterium extorquens).